A 74-amino-acid chain; its full sequence is Alpha-conotoxin GeXIVA (74 aa).

The N-terminal stretch at Met-1–Ala-22 is a signal peptide. Residues Val-23–Lys-46 constitute a propeptide that is removed on maturation. An interacts with alpha-9-alpha-10 (CHRNA9-CHRNA10) nAChR region spans residues Arg-56–Arg-64.

It belongs to the conotoxin O1 superfamily. Post-translationally, the native disulfide bond pairing has not been studied. Three isomers may exist: the bead isomer (I-II; III-IV), the globular isomer (I-III; II-IV), the ribbon isomer (I-IV; II-III). They have all been synthesized and their activity tested. All of them show similar potency on alpha-9-alpha-10 (CHRNA9-CHRNA10) nAChR, showing that disulfide bonds does not significantly affect their activity. In addition, removal of disulfide bonds does not affect the activity on alpha-9-alpha-10 (CHRNA9-CHRNA10) nAChR either. In terms of tissue distribution, expressed by the venom duct.

It localises to the secreted. In terms of biological role, alpha-conotoxins act on postsynaptic membranes, they bind to the nicotinic acetylcholine receptors (nAChR) and thus inhibit them. This toxin is very potent on alpha-9-alpha-10/CHRNA9-CHRNA10 nAChR (IC(50)=4.61-12 nM for the bead isomer (I-II; III-IV), IC(50)=7-16 nM for the ribbon isomer (I-IV; II-III) and IC(50)=22.7 nM for the globular isomer (I-III; II-IV)). The bead isomer also shows a weak inhibition on other nAChRs (alpha-1-beta-1-delta-epsilon/CHRNA1-CHRNB1-CHRND-CHRNE, alpha-7/CHRNA7, alpha-6/alpha-3-beta-2-beta-3 (CHRNA6/CHRNA3-CHRNB2-CHRNB3), alpha-3-beta-2/CHRNA3-CHRNB2, alpha-2-beta-2/CHRNA2-CHRNB2, alpha-6/alpha-3-beta-4 (CHRNA6/CHRNA3-CHRNB4), alpha-4-beta-2/CHRNA4-CHRNB2, alpha-4-beta-4/CHRNA4-CHRNB4, alpha-2-beta-4/CHRNA2-CHRNB4, alpha-3-beta-4/CHRNA3-CHRNB4). The toxin blockade is voltage-dependent, and its binding site does not overlap with the binding site of the competitive antagonist alpha-conotoxin RgIA. The toxin inhibits Sf9 cell growth. Both the bead and ribbon isomers relieve pain effects in the rat chronic constriction injury (CCI) model of neuropathic pain, and in the acute pain model of tail flick test, but have no effect on motor performance. This is Alpha-conotoxin GeXIVA from Conus generalis (General cone).